The following is a 1446-amino-acid chain: Major viral transcription factor ICP4 homolog (1446 aa).

Disordered stretches follow at residues 25–59 (AEEEGIASGPDGGSQGSRRRGSSGEDLLFGPGGLF), 73–493 (AAAG…PPAD), 801–987 (PGPA…HTPR), and 1385–1446 (THRP…LLLR). The segment covering 73 to 94 (AAAGATRPPRPPSAQQQQQPRR) has biased composition (low complexity). Acidic residues predominate over residues 101-112 (VLDDEDEEEDEP). 2 stretches are compositionally biased toward low complexity: residues 166 to 189 (RSSPSAASPASSSGSPGPSAAPRR) and 216 to 241 (PAAVAAAPARRGPASPASPAAGPVSA). Positions 262–277 (REPLLDEPAAARRLDP) are enriched in basic and acidic residues. Low complexity-rich tracts occupy residues 284-306 (SPVSSNPNSNSNSTTTVAVETVA) and 345-397 (GFSS…SSSS). The span at 415–426 (GPPPSPPAPAAA) shows a compositional bias: pro residues. The span at 427–442 (PRPSASSASSSAAASP) shows a compositional bias: low complexity. Residues 803-815 (PAEPAPGLPPLWP) are compositionally biased toward pro residues. Low complexity predominate over residues 827 to 877 (PAAAGAPSGLPGSGPSSPASTKSSSSTKSSSSTKSGLSGSSGYASSPAAGP). Residues 883-892 (RRKKKRRAPG) show a composition bias toward basic residues. Residues 933–952 (LGLGPAPDPAPALLSSSSSS) show a composition bias toward low complexity.

It belongs to the herpesviridae ICP4 family. In terms of processing, a long stretch of serine residues may be a major site of phosphorylation.

The protein resides in the host nucleus. In terms of biological role, this IE protein is a multifunctional protein capable of migrating to the nucleus, binding to DNA, trans-activating other viral genes, and autoregulating its own synthesis. The chain is Major viral transcription factor ICP4 homolog (IE) from Suid herpesvirus 1 (strain Kaplan) (SuHV-1).